Consider the following 159-residue polypeptide: MQEFSHIKDDRAYMVDISNKDTVVRYATASGKIKLHDETVEKIRSGDVEKGNVLATARTAAILAVKRTPDLIPMCHQIPITSVDVEFEIGKSDVTANVEVKSVGRTGVEMEALTGVSVALLTIWDMVKSAEKDNTGNYPSTAIENIHVIRKVKETITNQ.

Residues 74-76 (MCH) and 110-111 (ME) each bind substrate. D125 is an active-site residue.

This sequence belongs to the MoaC family. Homohexamer; trimer of dimers.

The catalysed reaction is (8S)-3',8-cyclo-7,8-dihydroguanosine 5'-triphosphate = cyclic pyranopterin phosphate + diphosphate. It functions in the pathway cofactor biosynthesis; molybdopterin biosynthesis. Catalyzes the conversion of (8S)-3',8-cyclo-7,8-dihydroguanosine 5'-triphosphate to cyclic pyranopterin monophosphate (cPMP). The protein is Probable cyclic pyranopterin monophosphate synthase of Methanococcoides burtonii (strain DSM 6242 / NBRC 107633 / OCM 468 / ACE-M).